Reading from the N-terminus, the 442-residue chain is SPRY domain-containing protein 3 (442 aa).

In terms of domain architecture, B30.2/SPRY spans 17–204; it reads DLNLHYRFLN…VRLHLNAELG (188 aa). Residues 371 to 394 form a disordered region; sequence EGEEEEEEEEEEEDGEEIEPEHEG. Residues 372 to 390 show a composition bias toward acidic residues; sequence GEEEEEEEEEEEDGEEIEP.

The chain is SPRY domain-containing protein 3 (SPRYD3) from Pongo abelii (Sumatran orangutan).